The following is a 162-amino-acid chain: Sorting nexin-3 (162 aa).

The disordered stretch occupies residues 1–23 (MPREFKSFGSTEKSLLSKGHGEP). Residues 38 to 161 (IEVHNPKTHI…VRFIEAEKFV (124 aa)) form the PX domain. Residues R81, S83, K112, and R127 each coordinate a 1,2-diacyl-sn-glycero-3-phospho-(1D-myo-inositol-3-phosphate).

Belongs to the sorting nexin family. Monomer. Interacts with RBD2, YIF1, YIP1 and YIP5.

It is found in the cytoplasm. The protein localises to the golgi apparatus membrane. It localises to the prevacuolar compartment membrane. Required for retention of late Golgi membrane proteins. Component of the retrieval machinery that functions by direct interaction with the cytosolic tails of certain TGN membrane proteins during the sorting/budding process at the prevacuolar compartment. Binds phosphatidylinositol 3-phosphate (PtdIns(P3)). The polypeptide is Sorting nexin-3 (SNX3) (Saccharomyces cerevisiae (strain ATCC 204508 / S288c) (Baker's yeast)).